The following is a 301-amino-acid chain: Homoserine kinase (301 aa).

89 to 99 serves as a coordination point for ATP; it reads KPGSGLGSSSA.

The protein belongs to the GHMP kinase family. Homoserine kinase subfamily.

Its subcellular location is the cytoplasm. The catalysed reaction is L-homoserine + ATP = O-phospho-L-homoserine + ADP + H(+). The protein operates within amino-acid biosynthesis; L-threonine biosynthesis; L-threonine from L-aspartate: step 4/5. Its function is as follows. Catalyzes the ATP-dependent phosphorylation of L-homoserine to L-homoserine phosphate. This chain is Homoserine kinase, found in Methanococcus maripaludis (strain DSM 14266 / JCM 13030 / NBRC 101832 / S2 / LL).